A 391-amino-acid polypeptide reads, in one-letter code: Pectate lyase D (391 aa).

Positions 1–31 (MNNTRVSFRSTKSLLAAIIATSMMTWSVNRA) are cleaved as a signal peptide. Asp170 and Asp213 together coordinate Ca(2+). Arg266 is a catalytic residue.

Belongs to the polysaccharide lyase 1 family. PLBC subfamily. Ca(2+) serves as cofactor.

It localises to the secreted. The catalysed reaction is Eliminative cleavage of (1-&gt;4)-alpha-D-galacturonan to give oligosaccharides with 4-deoxy-alpha-D-galact-4-enuronosyl groups at their non-reducing ends.. It participates in glycan metabolism; pectin degradation; 2-dehydro-3-deoxy-D-gluconate from pectin: step 2/5. Functionally, involved in maceration and soft-rotting of plant tissue. The chain is Pectate lyase D (pelD) from Dickeya chrysanthemi (Pectobacterium chrysanthemi).